A 219-amino-acid chain; its full sequence is Pyridoxine/pyridoxamine 5'-phosphate oxidase (219 aa).

Residues 15-18 (RRDY) and lysine 73 contribute to the substrate site. FMN contacts are provided by residues 68–73 (RMVLLK), 83–84 (YT), arginine 89, lysine 90, and glutamine 112. Residues tyrosine 130, arginine 134, and serine 138 each contribute to the substrate site. FMN-binding positions include 147 to 148 (QS) and tryptophan 192. Residue 198–200 (RLH) participates in substrate binding. Arginine 202 provides a ligand contact to FMN.

Belongs to the pyridoxamine 5'-phosphate oxidase family. In terms of assembly, homodimer. Requires FMN as cofactor.

It catalyses the reaction pyridoxamine 5'-phosphate + O2 + H2O = pyridoxal 5'-phosphate + H2O2 + NH4(+). It carries out the reaction pyridoxine 5'-phosphate + O2 = pyridoxal 5'-phosphate + H2O2. Its pathway is cofactor metabolism; pyridoxal 5'-phosphate salvage; pyridoxal 5'-phosphate from pyridoxamine 5'-phosphate: step 1/1. It participates in cofactor metabolism; pyridoxal 5'-phosphate salvage; pyridoxal 5'-phosphate from pyridoxine 5'-phosphate: step 1/1. Its function is as follows. Catalyzes the oxidation of either pyridoxine 5'-phosphate (PNP) or pyridoxamine 5'-phosphate (PMP) into pyridoxal 5'-phosphate (PLP). The polypeptide is Pyridoxine/pyridoxamine 5'-phosphate oxidase (Acaryochloris marina (strain MBIC 11017)).